Consider the following 492-residue polypeptide: NADH-quinone oxidoreductase subunit N (492 aa).

14 consecutive transmembrane segments (helical) span residues 16–36 (LLIP…VGVF), 44–64 (LYIT…FLEG), 81–101 (ISLL…LFFM), 111–131 (GAEF…MASS), 134–154 (LILI…LIAL), 168–188 (FIMG…LYAA), 210–230 (ILVF…VTLV), 244–264 (NALL…AVII), 276–296 (AFVE…PNLI), 306–326 (MLAY…LINT), 332–352 (VIFF…GILW), 382–402 (LAIL…FCVF), 423–443 (IMAI…IYIF), and 463–483 (FALS…QNLL).

It belongs to the complex I subunit 2 family. As to quaternary structure, NDH-1 is composed of 14 different subunits. Subunits NuoA, H, J, K, L, M, N constitute the membrane sector of the complex.

The protein resides in the cell inner membrane. It catalyses the reaction a quinone + NADH + 5 H(+)(in) = a quinol + NAD(+) + 4 H(+)(out). Its function is as follows. NDH-1 shuttles electrons from NADH, via FMN and iron-sulfur (Fe-S) centers, to quinones in the respiratory chain. The immediate electron acceptor for the enzyme in this species is believed to be ubiquinone. Couples the redox reaction to proton translocation (for every two electrons transferred, four hydrogen ions are translocated across the cytoplasmic membrane), and thus conserves the redox energy in a proton gradient. The sequence is that of NADH-quinone oxidoreductase subunit N from Helicobacter hepaticus (strain ATCC 51449 / 3B1).